A 295-amino-acid polypeptide reads, in one-letter code: 4-diphosphocytidyl-2-C-methyl-D-erythritol kinase (295 aa).

Residue Lys-22 is part of the active site. ATP is bound at residue 106-116 (PAGGGFGGGSS). Residue Asp-148 is part of the active site.

This sequence belongs to the GHMP kinase family. IspE subfamily.

The enzyme catalyses 4-CDP-2-C-methyl-D-erythritol + ATP = 4-CDP-2-C-methyl-D-erythritol 2-phosphate + ADP + H(+). The protein operates within isoprenoid biosynthesis; isopentenyl diphosphate biosynthesis via DXP pathway; isopentenyl diphosphate from 1-deoxy-D-xylulose 5-phosphate: step 3/6. Functionally, catalyzes the phosphorylation of the position 2 hydroxy group of 4-diphosphocytidyl-2C-methyl-D-erythritol. This Xanthomonas euvesicatoria pv. vesicatoria (strain 85-10) (Xanthomonas campestris pv. vesicatoria) protein is 4-diphosphocytidyl-2-C-methyl-D-erythritol kinase.